The primary structure comprises 143 residues: Small ribosomal subunit protein uS12 (143 aa).

A compositionally biased stretch (basic residues) spans 1-19; that stretch reads MGKPRGLRTARKHVNHRRD. The disordered stretch occupies residues 1-23; the sequence is MGKPRGLRTARKHVNHRRDQRWA. Residue Pro62 is modified to 3-hydroxyproline.

The protein belongs to the universal ribosomal protein uS12 family. In terms of assembly, component of the 40S small ribosomal subunit. Hydroxylation at Pro-62 affects translation termination efficiency.

It localises to the cytoplasm. It is found in the cytosol. Its subcellular location is the rough endoplasmic reticulum. The sequence is that of Small ribosomal subunit protein uS12 (RpS23) from Drosophila melanogaster (Fruit fly).